The chain runs to 378 residues: Mating-type protein MAT-1 (378 aa).

Positions 60 to 117 form a DNA-binding region, alpha box; that stretch reads KARKALNAFVGFRCYYITIPMFKPWPMKKLSNLIGLLWEADPNKSLWSLMAKPWSTIR.

It belongs to the MATALPHA1 family.

It localises to the nucleus. Mating type proteins are sequence specific DNA-binding proteins that act as master switches in fungal differentiation by controlling gene expression in a cell type-specific fashion. Transcriptional activator that induces the transcription of alpha-specific genes. This is Mating-type protein MAT-1 (MAT1) from Cochliobolus sativus (Common root rot and spot blotch fungus).